A 92-amino-acid polypeptide reads, in one-letter code: Alpha-conotoxin-like Rt20.2 (92 aa).

Positions 1-24 (MPKLEMMLLVLLILPLSYFSAAGG) are cleaved as a signal peptide. The propeptide occupies 25–45 (QVVQGDLHSDVLARYLQRGDR). Glutamate 49 is modified (4-carboxyglutamate). Proline 55 is subject to 4-hydroxyproline. Disulfide bonds link cysteine 63-cysteine 72, cysteine 68-cysteine 80, cysteine 73-cysteine 90, and cysteine 78-cysteine 92.

Belongs to the conotoxin D superfamily. As to quaternary structure, hetero-, homo- or pseudo-homodimer (identical sequence, different post-translational modifications). Expressed by the venom duct.

The protein resides in the secreted. Alpha-conotoxins act on postsynaptic membranes, they bind to the nicotinic acetylcholine receptors (nAChR) and thus inhibit them. Through its two C-terminal domains, this homodimeric protein would bind to two nAChR allosteric sites, located outside the nAChR C-loop of the principal binding face and at the adjacent binding interface in a clockwise direction. This toxin specifically blocks mammalian neuronal nAChR of the alpha-7/CHRNA7, alpha-3-beta-2/CHRNA3-CHRNB2 and alpha-4-beta-2/CHRNA4-CHRNB2 subtypes. The sequence is that of Alpha-conotoxin-like Rt20.2 from Conus rattus (Rat cone).